The chain runs to 92 residues: Bombyxin A-7 (92 aa).

The first 19 residues, 1 to 19 (MKLLLAIALMLTIVMWVST), serve as a signal peptide directing secretion. Gln20 is modified (pyrrolidone carboxylic acid). Cystine bridges form between Cys29-Cys79, Cys41-Cys92, and Cys78-Cys83. Positions 50-70 (SDAQYASYGSAWLMPYSEGRG) are cleaved as a propeptide — c peptide like.

It belongs to the insulin family. In terms of assembly, heterodimer of a B chain and an A chain linked by two disulfide bonds.

The protein resides in the secreted. In terms of biological role, brain peptide responsible for activation of prothoracic glands to produce ecdysone in insects. The sequence is that of Bombyxin A-7 (BBXA7) from Bombyx mori (Silk moth).